We begin with the raw amino-acid sequence, 923 residues long: Mitochondrial 10-formyltetrahydrofolate dehydrogenase (923 aa).

The N-terminal 19 residues, 1–19 (MLWRGSQALRHFSTSRVYF), are a transit peptide targeting the mitochondrion; not cleaved. The interval 23-331 (LKLALIGQSL…PASQYFSAGE (309 aa)) is hydrolase domain. The residue at position 31 (Ser31) is a Phosphoserine. Lys60 carries the N6-succinyllysine modification. A (6R)-10-formyltetrahydrofolate-binding site is contributed by 110-112 (QFI). His128 (proton donor) is an active-site residue. (6R)-10-formyltetrahydrofolate is bound at residue Asp164. The Carrier domain occupies 339–416 (AEELKVAETI…DFIQKVVRRL (78 aa)). Ser375 is subject to O-(pantetheine 4'-phosphoryl)serine. The aldehyde dehydrogenase domain stretch occupies residues 438-923 (TVKIPYQCFI…LKIKTVTLEY (486 aa)). Residues 592-594 (IPW) and 618-621 (KPAQ) each bind NADP(+). At Ser650 the chain carries Phosphoserine. NADP(+) contacts are provided by residues 651 to 656 (GGVAGQ) and 671 to 672 (GS). Lys681 is subject to N6-succinyllysine. The active-site Proton acceptor is the Glu694. NADP(+) is bound at residue 694 to 695 (EL). Cys728 functions as the Proton donor in the catalytic mechanism. Residues Lys778 and 825–827 (ESF) each bind NADP(+). An N6-acetyllysine modification is found at Lys903.

The protein in the N-terminal section; belongs to the GART family. In the C-terminal section; belongs to the aldehyde dehydrogenase family. ALDH1L subfamily. Phosphopantetheinylation at Ser-375 by AASDHPPT is required for the formyltetrahydrofolate dehydrogenase activity.

It localises to the mitochondrion. It catalyses the reaction (6R)-10-formyltetrahydrofolate + NADP(+) + H2O = (6S)-5,6,7,8-tetrahydrofolate + CO2 + NADPH + H(+). Functionally, mitochondrial 10-formyltetrahydrofolate dehydrogenase that catalyzes the NADP(+)-dependent conversion of 10-formyltetrahydrofolate to tetrahydrofolate and carbon dioxide. This is Mitochondrial 10-formyltetrahydrofolate dehydrogenase from Mus musculus (Mouse).